We begin with the raw amino-acid sequence, 268 residues long: Putative F-box protein At3g23420 (268 aa).

Residues 5 to 51 form the F-box domain; the sequence is PRDLSDLPRNMAEEVLSRVPMTSLRRLRFTCKKWNTLSRCRSFAKKH.

The protein is Putative F-box protein At3g23420 of Arabidopsis thaliana (Mouse-ear cress).